We begin with the raw amino-acid sequence, 241 residues long: Ribonuclease PH (241 aa).

Residues Arg89 and 127-129 (GTR) each bind phosphate.

The protein belongs to the RNase PH family. Homohexameric ring arranged as a trimer of dimers.

It carries out the reaction tRNA(n+1) + phosphate = tRNA(n) + a ribonucleoside 5'-diphosphate. In terms of biological role, phosphorolytic 3'-5' exoribonuclease that plays an important role in tRNA 3'-end maturation. Removes nucleotide residues following the 3'-CCA terminus of tRNAs; can also add nucleotides to the ends of RNA molecules by using nucleoside diphosphates as substrates, but this may not be physiologically important. Probably plays a role in initiation of 16S rRNA degradation (leading to ribosome degradation) during starvation. The polypeptide is Ribonuclease PH (Xanthomonas campestris pv. campestris (strain 8004)).